A 341-amino-acid chain; its full sequence is L-threonine 3-dehydrogenase (341 aa).

Cys-38 is a Zn(2+) binding site. Residues Thr-40 and His-43 each act as charge relay system in the active site. Residues His-63, Glu-64, Cys-93, Cys-96, Cys-99, and Cys-107 each coordinate Zn(2+). Residues Ile-175, Asp-195, Arg-200, 262–264 (LGI), and 286–287 (IY) contribute to the NAD(+) site.

This sequence belongs to the zinc-containing alcohol dehydrogenase family. Homotetramer. Zn(2+) is required as a cofactor.

The protein resides in the cytoplasm. The catalysed reaction is L-threonine + NAD(+) = (2S)-2-amino-3-oxobutanoate + NADH + H(+). The protein operates within amino-acid degradation; L-threonine degradation via oxydo-reductase pathway; glycine from L-threonine: step 1/2. Its function is as follows. Catalyzes the NAD(+)-dependent oxidation of L-threonine to 2-amino-3-ketobutyrate. This chain is L-threonine 3-dehydrogenase, found in Serratia proteamaculans (strain 568).